A 220-amino-acid polypeptide reads, in one-letter code: 26S proteasome non-ATPase regulatory subunit 9 (220 aa).

Coiled-coil stretches lie at residues 4 to 32 (GTTT…GQIL) and 61 to 91 (RLAR…YHSE). The PDZ domain occupies 102 to 200 (RASALDLDSD…QLDLILVPKT (99 aa)).

This sequence belongs to the proteasome subunit p27 family. As to quaternary structure, interacts with PI31; this interaction is increased by PI31 ADP-ribosylation. Interacts with Rpt5.

Acts as a chaperone during the assembly of the 26S proteasome, specifically of the base subcomplex of the PA700/19S regulatory complex (RC). In Drosophila melanogaster (Fruit fly), this protein is 26S proteasome non-ATPase regulatory subunit 9.